The primary structure comprises 665 residues: Golgi-associated RAB2B interactor protein 3 (665 aa).

Disordered stretches follow at residues 211-240 (EIRGEGDQNSRPQSSPTVSEATSAAFAGGE), 272-296 (AAAGTAGPAAGPAAGTAGPAAGTAG), and 480-590 (SEGY…GSVS). Residues 219–232 (NSRPQSSPTVSEAT) are compositionally biased toward polar residues. The segment covering 499–513 (EAKEKRERREKDRTS) has biased composition (basic and acidic residues). Basic residues-rich tracts occupy residues 514–538 (SRKSSHHRRTGMSRHSSKDKSRKTS) and 554–566 (GHGRLRGKRHSSS). The Bipartite nuclear localization signal motif lies at 515-531 (RKSSHHRRTGMSRHSSK). Serine 652 is subject to Phosphoserine.

It belongs to the GARIN family. Interacts (via N-terminus) with RAB2B (in GTP-bound form). Interacts with FRG1. Expressed in adult spermatocytes and spermatids.

Its subcellular location is the golgi apparatus. The protein localises to the nucleus. It is found in the cajal body. In terms of biological role, may be involved in RNA biogenesis. This chain is Golgi-associated RAB2B interactor protein 3, found in Mus musculus (Mouse).